The following is a 1342-amino-acid chain: DNA-directed RNA polymerase subunit beta (1342 aa).

The protein belongs to the RNA polymerase beta chain family. The RNAP catalytic core consists of 2 alpha, 1 beta, 1 beta' and 1 omega subunit. When a sigma factor is associated with the core the holoenzyme is formed, which can initiate transcription.

The enzyme catalyses RNA(n) + a ribonucleoside 5'-triphosphate = RNA(n+1) + diphosphate. Its function is as follows. DNA-dependent RNA polymerase catalyzes the transcription of DNA into RNA using the four ribonucleoside triphosphates as substrates. This Buchnera aphidicola subsp. Schizaphis graminum (strain Sg) protein is DNA-directed RNA polymerase subunit beta.